The sequence spans 131 residues: Interleukin-13 (131 aa).

Positions 1-18 (MALWLTVVIALTCLGGLA) are cleaved as a signal peptide. N-linked (GlcNAc...) asparagine glycosylation is found at N38, N48, N56, and N71. Intrachain disulfides connect C47–C75 and C63–C89.

Belongs to the IL-4/IL-13 family. In terms of assembly, interacts with IL13RA2.

It is found in the secreted. Its function is as follows. Cytokine that plays important roles in allergic inflammation and immune response to parasite infection. Synergizes with IL2 in regulating interferon-gamma synthesis. Stimulates B-cell proliferation, and activation of eosinophils, basophils, and mast cells. Plays an important role in controlling IL33 activity by modulating the production of transmembrane and soluble forms of interleukin-1 receptor-like 1/IL1RL1. Displays the capacity to antagonize Th1-driven proinflammatory immune response and downregulates synthesis of many proinflammatory cytokines including IL1, IL6, IL10, IL12 and TNF-alpha through a mechanism that partially involves suppression of NF-kappa-B. Also functions on nonhematopoietic cells, including endothelial cells where it induces vascular cell adhesion protein 1/VCAM1, which is important in the recruitment of eosinophils. Exerts its biological effects through its receptors which comprises the IL4R chain and the IL13RA1 chain, to activate JAK1 and TYK2, leading to the activation of STAT6. Aside from IL13RA1, another receptor IL13RA2 acts as a high affinity decoy for IL13 and mediates internalization and depletion of extracellular IL13. In Canis lupus familiaris (Dog), this protein is Interleukin-13 (IL13).